Consider the following 150-residue polypeptide: MKVQVKLLDPRLGKEWPLPSYATAGSAGLDLRACLDEAIEIEPGQTVLVKTGMAIYIHDVNFAGLILPRSGLGHKHGIVLGNLVGLIDSDYQGELMVSVWNRGQTTFRLEPGERLAQYVLVPVVQAEFEQVEEFEETLRGAGGFGHTGKQ.

Substrate-binding positions include 69–71 (RSG), asparagine 82, 86–88 (LID), and methionine 96.

The protein belongs to the dUTPase family. Requires Mg(2+) as cofactor.

It carries out the reaction dUTP + H2O = dUMP + diphosphate + H(+). The protein operates within pyrimidine metabolism; dUMP biosynthesis; dUMP from dCTP (dUTP route): step 2/2. Its function is as follows. This enzyme is involved in nucleotide metabolism: it produces dUMP, the immediate precursor of thymidine nucleotides and it decreases the intracellular concentration of dUTP so that uracil cannot be incorporated into DNA. This Acinetobacter baumannii (strain AB307-0294) protein is Deoxyuridine 5'-triphosphate nucleotidohydrolase.